The following is a 466-amino-acid chain: Cell division protein FtsP (466 aa).

Residues 1-28 constitute a signal peptide (tat-type signal); that stretch reads MNYSRRSLFKKTLIATALSALPATLLAA.

The protein belongs to the FtsP family. In terms of processing, predicted to be exported by the Tat system. The position of the signal peptide cleavage has not been experimentally proven.

The protein localises to the periplasm. Functionally, cell division protein that is required for growth during stress conditions. May be involved in protecting or stabilizing the divisomal assembly under conditions of stress. This is Cell division protein FtsP from Actinobacillus succinogenes (strain ATCC 55618 / DSM 22257 / CCUG 43843 / 130Z).